The chain runs to 128 residues: Probable 4-amino-4-deoxy-L-arabinose-phosphoundecaprenol flippase subunit ArnF (128 aa).

The Cytoplasmic segment spans residues 1–2 (MG). A helical membrane pass occupies residues 3 to 23 (LIWGLFSVIIASVAQLSLGFA). Residues 24-35 (ASHLPPMTHLWD) are Periplasmic-facing. A helical transmembrane segment spans residues 36-56 (FIAALLAFGLDARILLLGLLG). The Cytoplasmic portion of the chain corresponds to 57–75 (YLLSVFCWYKTLHKLALSK). Residues 76-96 (AYALLSMSYVLVWIASMVLPG) form a helical membrane-spanning segment. The Periplasmic portion of the chain corresponds to 97-100 (REGT). A helical transmembrane segment spans residues 101 to 121 (FSLKALLGVACIMSGLMLIFL). Over 122–128 (PTTKQRY) the chain is Cytoplasmic.

This sequence belongs to the ArnF family. Heterodimer of ArnE and ArnF.

It localises to the cell inner membrane. The protein operates within bacterial outer membrane biogenesis; lipopolysaccharide biosynthesis. In terms of biological role, translocates 4-amino-4-deoxy-L-arabinose-phosphoundecaprenol (alpha-L-Ara4N-phosphoundecaprenol) from the cytoplasmic to the periplasmic side of the inner membrane. The chain is Probable 4-amino-4-deoxy-L-arabinose-phosphoundecaprenol flippase subunit ArnF from Shigella flexneri serotype 5b (strain 8401).